The primary structure comprises 210 residues: DNA-directed RNA polymerase subunit 5-like protein 1 (210 aa).

It belongs to the archaeal Rpo5/eukaryotic RPB5 RNA polymerase subunit family.

Its subcellular location is the nucleus. The sequence is that of DNA-directed RNA polymerase subunit 5-like protein 1 (NRPB5L1) from Arabidopsis thaliana (Mouse-ear cress).